Here is a 559-residue protein sequence, read N- to C-terminus: DNA primase (559 aa).

A CHC2-type zinc finger spans residues 37-61 (CPFHEERSASFSVNQVKGFYYCFGC). The region spanning 246–327 (KQVIVTEGYL…KGGVILFENN (82 aa)) is the Toprim domain. Residues Glu-252, Asp-296, and Asp-298 each contribute to the Mg(2+) site.

The protein belongs to the DnaG primase family. In terms of assembly, monomer. Interacts with DnaB. It depends on Zn(2+) as a cofactor. Mg(2+) serves as cofactor.

It catalyses the reaction ssDNA + n NTP = ssDNA/pppN(pN)n-1 hybrid + (n-1) diphosphate.. In terms of biological role, RNA polymerase that catalyzes the synthesis of short RNA molecules used as primers for DNA polymerase during DNA replication. The protein is DNA primase of Helicobacter pylori (strain J99 / ATCC 700824) (Campylobacter pylori J99).